A 313-amino-acid chain; its full sequence is Serine/threonine-protein kinase SZE1 (313 aa).

A lipid anchor (N-myristoyl glycine) is attached at G2. Residues 43–311 (MELGESLGYI…EVLDNLNAIA (269 aa)) enclose the Protein kinase domain. ATP is bound by residues 49–57 (LGYINPKTL) and K71.

This sequence belongs to the protein kinase superfamily. Ser/Thr protein kinase family. Component of an immune signaling complex made of, at least, SZE1, BKN2/SZE2, ZAR1 and ZED1. Interacts directly with ZED1, ZAR1 and Pseudomonas syringae HOPZ1A at the plasma membrane. Post-translationally, N-terminal myristoylation is critical for plasma membrane localization and implication in defense responses. Autophosphorylated. Expressed in roots, seedlings, rosette leaves, floral organs, siliques and inflorescence stems.

Its subcellular location is the cell membrane. The enzyme catalyses L-seryl-[protein] + ATP = O-phospho-L-seryl-[protein] + ADP + H(+). The catalysed reaction is L-threonyl-[protein] + ATP = O-phospho-L-threonyl-[protein] + ADP + H(+). Functionally, together with BKN2/SZE2 and ZED1, required for effector-triggered immunity (e.g. Pseudomonas syringae effector type III HopZ1a) via the activation of ZAR1, thus being essential for resistance against P.syringae pv. tomato DC3000 expressing HopZ1a. This Arabidopsis thaliana (Mouse-ear cress) protein is Serine/threonine-protein kinase SZE1.